An 8545-amino-acid polypeptide reads, in one-letter code: Nuclear anchorage protein 1 (8545 aa).

The segment at 1 to 325 (MSSSPPARPC…VITYVSQFVR (325 aa)) is actin-binding. The Cytoplasmic portion of the chain corresponds to 1–8494 (MSSSPPARPC…QRSRWRRVLR (8494 aa)). The region spanning 23 to 130 (KAQKNTFTRW…LIWQIILHFQ (108 aa)) is the Calponin-homology (CH) 1 domain. Residues 148 to 197 (TEEPTSSAQPEVVVTAPSPTPSSKKSHSKVSSLSGSKTSLASGEKAPSSP) form a disordered region. Residues 159-190 (VVVTAPSPTPSSKKSHSKVSSLSGSKTSLASG) are compositionally biased toward low complexity. One can recognise a Calponin-homology (CH) 2 domain in the interval 222–328 (QSVEQVFLRW…YVSQFVRMFG (107 aa)). 19 coiled-coil regions span residues 754-774 (NIRDKLIELERLNEIYDNHSR), 1072-1101 (SFFQLEFDRLNEKLNMLIHDKDKLRELMVH), 1215-1236 (ADILRMKDEKKRDEKTIDEIQA), 1324-1384 (DTKK…QFED), 1574-1629 (RSIE…DLVK), 1725-1754 (ENRNDLEEVKRLAAEIDRAIDTASSMYEDA), 1950-1981 (PAIIESLDKIKDQINNARDNINRQIDNLNYNQ), 2103-2580 (DNIE…KKSD), 2682-2712 (SVKETLDKLKQAKEEDDKLAGVYDELEKIAK), 2852-2949 (IMQE…NIGK), 3002-3119 (DQIV…KTVV), 3178-3295 (DDEK…DEFK), 3346-3417 (QLQH…PEND), 3482-3552 (DELI…EKSL), 3587-3703 (KAEE…ELLD), 3781-3839 (ALKA…KEQL), 3902-4022 (AAHD…KTVV), 4114-4198 (LDVA…DEFK), and 4249-4320 (QLQH…PEND). The segment covering 3010–3019 (EAEDVTAKES) has biased composition (basic and acidic residues). The tract at residues 3010–3033 (EAEDVTAKESAKKKKKDKKKSPQE) is disordered. 6 tandem repeats follow at residues 3241 to 4143 (QVAK…KIDP), 4144 to 5097 (QVAK…KIDP), 5098 to 6000 (QVAK…KIDP), 6001 to 6903 (QVAK…KIDP), 6904 to 7806 (QVAK…KIDP), and 7807 to 8199 (QVAK…EERA). The tract at residues 3241 to 8199 (QVAKDIKDSK…TLIPDLEERA (4959 aa)) is 6 X tandem repeat. The segment covering 3913-3922 (EAEDVTAKES) has biased composition (basic and acidic residues). A disordered region spans residues 3913–3936 (EAEDVTAKESAKKKKKDKKKSPQE). Residues 4372-4393 (ITREDGGDDNKSPDELIDDRGR) show a composition bias toward basic and acidic residues. Positions 4372 to 4395 (ITREDGGDDNKSPDELIDDRGRST) are disordered. Coiled-coil stretches lie at residues 4436–4506 (DELI…EKSL), 4541–4657 (KAEE…ELLD), 4735–4793 (ALKA…KEQL), 4856–4976 (AAHD…KTVV), 5035–5152 (DDEK…DEFK), 5203–5274 (QLQH…PEND), 5339–5409 (DELI…EKSL), 5444–5560 (KAEE…ELLD), 5638–5696 (ALKA…KEQL), 5759–5879 (AAHD…KTVV), 5938–6055 (DDEK…DEFK), 6106–6177 (QLQH…PEND), 6242–6312 (DELI…EKSL), 6347–6463 (KAEE…ELLD), 6541–6599 (ALKA…KEQL), 6662–6782 (AAHD…KTVV), 6841–6958 (DDEK…DEFK), 7009–7080 (QLQH…PEND), 7145–7215 (DELI…EKSL), 7250–7366 (KAEE…ELLD), 7444–7502 (ALKA…KEQL), 7565–7685 (AAHD…KTVV), 7744–7861 (DDEK…DEFK), 7912–7983 (QLQH…PEND), 8048–8118 (DELI…EKSL), 8153–8204 (KAEE…IWER), 8273–8329 (VAED…DINN), and 8370–8390 (STSIDLDQLLAEAKRLLKEIE). A compositionally biased stretch (basic and acidic residues) spans 4867–4876 (EAEDVTAKES). Residues 4867–4890 (EAEDVTAKESAKKKKKDKKKSPQE) are disordered. The span at 5770 to 5779 (EAEDVTAKES) shows a compositional bias: basic and acidic residues. The segment at 5770–5793 (EAEDVTAKESAKKKKKDKKKSPQE) is disordered. Positions 6673–6682 (EAEDVTAKES) are enriched in basic and acidic residues. The segment at 6673–6696 (EAEDVTAKESAKKKKKDKKKSPQE) is disordered. Residues 7576–7585 (EAEDVTAKES) show a composition bias toward basic and acidic residues. The interval 7576–7599 (EAEDVTAKESAKKKKKDKKKSPQE) is disordered. 2 disordered regions span residues 8391 to 8418 (PRLQLAQPDHDNEDDEDEEKGSDEKPYD) and 8449 to 8480 (SDSESRSEFDSLDSRSDGLLSPIPDDSTLSEE). The segment covering 8401 to 8411 (DNEDDEDEEKG) has biased composition (acidic residues). Residues 8451–8464 (SESRSEFDSLDSRS) are compositionally biased toward basic and acidic residues. Positions 8486 to 8545 (RSRWRRVLRTALPLQALLVLLMGAACLVPHCDDEYCCQLLNNFAKSFDPSLEFVNGPPPF) constitute a KASH domain. A helical; Anchor for type IV membrane protein membrane pass occupies residues 8495 to 8513 (TALPLQALLVLLMGAACLV). The Perinuclear space portion of the chain corresponds to 8514 to 8545 (PHCDDEYCCQLLNNFAKSFDPSLEFVNGPPPF).

The protein belongs to the nesprin family. Interacts with F-actin via its N-terminal domain. Most likely interacts with unc-84; the interaction is probably required to recruit anc-1 to the nuclear envelope. As to expression, ubiquitously expressed in all postembryonic cells.

Its subcellular location is the nucleus outer membrane. The protein localises to the cytoplasm. It localises to the cytoskeleton. In terms of biological role, plays a central role in nuclear and mitochondrial anchoring. Probably connects nuclei to the cytoskeleton by interacting with unc-84 at the nuclear envelope and with F-actin in the cytoplasm, creating a bridge across the nuclear envelope between the cytoskeleton and the nucleus. Has a role in positioning of the cell body of the PVQ lumbar interneuron. The chain is Nuclear anchorage protein 1 from Caenorhabditis elegans.